Consider the following 495-residue polypeptide: Bile acid-sensitive ion channel (495 aa).

Positions 1 to 30 (MEHTEKSQVHAEKGLLGKIKRYLSKRPLPS) are binds the plasma membrane and stabilizes the channel in the closed state. Over 1-61 (MEHTEKSQVH…NIAQNQNKVR (61 aa)) the chain is Cytoplasmic. The chain crosses the membrane as a helical span at residues 62-82 (KVIWLAVVLGSVSLLVWQIYS). Residues 83–459 (RLVNYFTWPT…GLFCGASLIT (377 aa)) lie on the Extracellular side of the membrane. Disulfide bonds link Cys-112/Cys-207, Cys-185/Cys-192, Cys-298/Cys-377, Cys-315/Cys-373, Cys-328/Cys-350, and Cys-330/Cys-342. 3 N-linked (GlcNAc...) asparagine glycosylation sites follow: Asn-147, Asn-163, and Asn-179. Residues Asn-370, Asn-405, and Asn-421 are each glycosylated (N-linked (GlcNAc...) asparagine). Residues 454 to 456 (GAS) carry the GAS motif; ion selectivity filter motif. Residues 460–480 (IIEIIEYFFTNFYWVLIFFLL) traverse the membrane as a helical segment. Residues 481-495 (KILETIQRTSPPQAV) lie on the Cytoplasmic side of the membrane.

It belongs to the amiloride-sensitive sodium channel (TC 1.A.6) family. ASIC5 subfamily. Forms homotrimeric channels. Expressed by cholangiocytes (at protein level). Detected in cerebellum, brainstem, kidney, liver, hepatocytes, lung, intestine and embryo. In the cerebellum, restricted to interneurons in the granular layer, specifically in GRM1-expressing unipolar brush cells of the vestibulocerebellum.

It is found in the apical cell membrane. Its subcellular location is the cell membrane. It catalyses the reaction Na(+)(in) = Na(+)(out). It carries out the reaction Li(+)(in) = Li(+)(out). The enzyme catalyses K(+)(in) = K(+)(out). The catalysed reaction is H(+)(in) = H(+)(out). Inhibited by the diuretic drug amiloride. Contrary to its rat ortholog it is not inhibited by Ca(2+). In terms of biological role, forms bile acid-gated sodium channels and may play a role in bile acid-dependent absorption and secretion by epithelial cells of the bile ducts. Displays high selectivity for sodium ions but can also permit the permeation of other cations. The gating could be indirect and the consequence of alterations of the membrane environment of the channel by bile acids. As a sodium channel of type II unipolar brush cells of the vestibulocerebellum, controlling the electrical activity of these cells, could play a role in motor coordination and balance. This Mus musculus (Mouse) protein is Bile acid-sensitive ion channel.